The sequence spans 361 residues: Ankyrin repeat domain-containing protein 16 (361 aa).

ANK repeat units lie at residues 36-66 (AGDTLLHCAARHGHRDVLAYLAEAWGMDIEA), 70-99 (DYKRPLHEAASMGHRDCVRYLLGRGAAVDC), 103-132 (ADWTPLMMACTRKNLGVIQELVEHGANPLL), 136-165 (DGWNSFHIASREGDPLILQYLLTVCPGAWK), 170-200 (IRRTPLHTAAMHGHLEAVKVLLKRCQYEPDY), 204-234 (CGVTALMDAIQCGHIDVARLLLDEHGACLSA), 238-268 (LGAQALHRAAVTGQDEAIRFLVSELGVDVDV), 273-302 (THLTALHYAAKEGHTSTIQTLLSLGADINS), and 306-335 (KNRSALHLACAGQHLACAKFLLQSGLKDSE).

Interacts with AARS; the interaction is direct.

It is found in the cytoplasm. Its subcellular location is the nucleus. Functionally, required to prevent the misactivation of serine (Ser) with tRNA(Ala) by promoting the hydrolysis of Ser-mischarged tRNA(Ala), thereby playing a role in translational fidelity. Binds directly to the catalytic domain of AARS/AlaRS and captures Ser that is misactivated by AARS/AlaRS, preventing the charging of Ser adenylates to tRNA(Ala) and precluding Ser misincorporation in nascent peptides. This chain is Ankyrin repeat domain-containing protein 16, found in Homo sapiens (Human).